Reading from the N-terminus, the 1319-residue chain is DNA-directed RNA polymerase subunit beta' (1319 aa).

Positions 59, 61, 74, and 77 each coordinate Zn(2+). Residues Asp449, Asp451, and Asp453 each contribute to the Mg(2+) site. Cys773, Cys846, Cys853, and Cys856 together coordinate Zn(2+).

This sequence belongs to the RNA polymerase beta' chain family. In terms of assembly, the RNAP catalytic core consists of 2 alpha, 1 beta, 1 beta' and 1 omega subunit. When a sigma factor is associated with the core the holoenzyme is formed, which can initiate transcription. Requires Mg(2+) as cofactor. It depends on Zn(2+) as a cofactor.

The catalysed reaction is RNA(n) + a ribonucleoside 5'-triphosphate = RNA(n+1) + diphosphate. Functionally, DNA-dependent RNA polymerase catalyzes the transcription of DNA into RNA using the four ribonucleoside triphosphates as substrates. This Fusobacterium nucleatum subsp. nucleatum (strain ATCC 25586 / DSM 15643 / BCRC 10681 / CIP 101130 / JCM 8532 / KCTC 2640 / LMG 13131 / VPI 4355) protein is DNA-directed RNA polymerase subunit beta'.